Here is a 432-residue protein sequence, read N- to C-terminus: 3-phosphoshikimate 1-carboxyvinyltransferase (432 aa).

Lysine 23, serine 24, and arginine 28 together coordinate 3-phosphoshikimate. Lysine 23 serves as a coordination point for phosphoenolpyruvate. Residues glycine 95 and arginine 123 each contribute to the phosphoenolpyruvate site. Residues serine 167, glutamine 169, aspartate 317, and lysine 344 each coordinate 3-phosphoshikimate. Residue glutamine 169 coordinates phosphoenolpyruvate. The active-site Proton acceptor is the aspartate 317. Residues arginine 348 and arginine 390 each contribute to the phosphoenolpyruvate site.

Belongs to the EPSP synthase family. In terms of assembly, monomer.

It localises to the cytoplasm. It catalyses the reaction 3-phosphoshikimate + phosphoenolpyruvate = 5-O-(1-carboxyvinyl)-3-phosphoshikimate + phosphate. Its pathway is metabolic intermediate biosynthesis; chorismate biosynthesis; chorismate from D-erythrose 4-phosphate and phosphoenolpyruvate: step 6/7. Its function is as follows. Catalyzes the transfer of the enolpyruvyl moiety of phosphoenolpyruvate (PEP) to the 5-hydroxyl of shikimate-3-phosphate (S3P) to produce enolpyruvyl shikimate-3-phosphate and inorganic phosphate. The polypeptide is 3-phosphoshikimate 1-carboxyvinyltransferase (Staphylococcus aureus (strain Newman)).